A 61-amino-acid chain; its full sequence is Large ribosomal subunit protein bL32 (61 aa).

The segment covering 1 to 16 (MAVPRRKTSPSRRGMR) has biased composition (basic residues). A disordered region spans residues 1–61 (MAVPRRKTSP…RQVLKVKKED (61 aa)). A compositionally biased stretch (basic and acidic residues) spans 17 to 44 (RSADALKKPTYVEDKDSGELRRPHHLDL).

Belongs to the bacterial ribosomal protein bL32 family.

The sequence is that of Large ribosomal subunit protein bL32 from Afipia carboxidovorans (strain ATCC 49405 / DSM 1227 / KCTC 32145 / OM5) (Oligotropha carboxidovorans).